A 274-amino-acid polypeptide reads, in one-letter code: UPF0173 metal-dependent hydrolase AnaeK_1127 (274 aa).

The protein belongs to the UPF0173 family.

In Anaeromyxobacter sp. (strain K), this protein is UPF0173 metal-dependent hydrolase AnaeK_1127.